The sequence spans 155 residues: Myosin light chain alkali (155 aa).

2 EF-hand domains span residues 7–41 and 80–115; these read REIE…LNLN and GCYE…LGES.

Myosin is a hexamer of 2 heavy chains and 4 light chains.

The sequence is that of Myosin light chain alkali (Mlc1) from Drosophila pseudoobscura pseudoobscura (Fruit fly).